Reading from the N-terminus, the 353-residue chain is Photosystem II D2 protein (353 aa).

T2 is subject to N-acetylthreonine. The residue at position 2 (T2) is a Phosphothreonine. Residues 41 to 61 (CAYFALGGWFTGTTFVTSWYT) traverse the membrane as a helical segment. H118 contacts chlorophyll a. A helical membrane pass occupies residues 125 to 141 (GFMLRQFELARSVQLRP). Positions 130 and 143 each coordinate pheophytin a. A helical transmembrane segment spans residues 153–166 (VFVSVFLIYPLGQS). H198 is a chlorophyll a binding site. A helical membrane pass occupies residues 208–228 (AALLCAIHGATVENTLFEDGD). Residues H215 and F262 each contribute to the a plastoquinone site. Position 215 (H215) interacts with Fe cation. Fe cation is bound at residue H269. A helical transmembrane segment spans residues 279-295 (GLWMSAIGVVGLALNLR).

Belongs to the reaction center PufL/M/PsbA/D family. PSII is composed of 1 copy each of membrane proteins PsbA, PsbB, PsbC, PsbD, PsbE, PsbF, PsbH, PsbI, PsbJ, PsbK, PsbL, PsbM, PsbT, PsbX, PsbY, PsbZ, Psb30/Ycf12, at least 3 peripheral proteins of the oxygen-evolving complex and a large number of cofactors. It forms dimeric complexes. The D1/D2 heterodimer binds P680, chlorophylls that are the primary electron donor of PSII, and subsequent electron acceptors. It shares a non-heme iron and each subunit binds pheophytin, quinone, additional chlorophylls, carotenoids and lipids. There is also a Cl(-1) ion associated with D1 and D2, which is required for oxygen evolution. The PSII complex binds additional chlorophylls, carotenoids and specific lipids. serves as cofactor.

The protein localises to the plastid. It is found in the chloroplast thylakoid membrane. The catalysed reaction is 2 a plastoquinone + 4 hnu + 2 H2O = 2 a plastoquinol + O2. Its function is as follows. Photosystem II (PSII) is a light-driven water:plastoquinone oxidoreductase that uses light energy to abstract electrons from H(2)O, generating O(2) and a proton gradient subsequently used for ATP formation. It consists of a core antenna complex that captures photons, and an electron transfer chain that converts photonic excitation into a charge separation. The D1/D2 (PsbA/PsbD) reaction center heterodimer binds P680, the primary electron donor of PSII as well as several subsequent electron acceptors. D2 is needed for assembly of a stable PSII complex. This Phalaenopsis aphrodite subsp. formosana (Moth orchid) protein is Photosystem II D2 protein.